The following is a 510-amino-acid chain: NAD(P)H-quinone oxidoreductase subunit 2 B, chloroplastic (510 aa).

13 helical membrane-spanning segments follow: residues 24–44, 57–77, 99–119, 124–144, 150–170, 183–203, 229–249, 295–315, 323–343, 347–367, 395–415, 418–438, and 484–504; these read LLLF…GLIL, IPWL…ALLF, IFQF…VEYI, MAIT…MFLC, ITIF…SGYT, YLLM…WLYG, ISIA…PAPF, WHLL…LVAI, MLAY…IVGD, GYAS…GTFA, ALSS…AGFF, LHLF…IGLL, and MIVC…IIAI.

This sequence belongs to the complex I subunit 2 family. As to quaternary structure, NDH is composed of at least 16 different subunits, 5 of which are encoded in the nucleus.

The protein localises to the plastid. It is found in the chloroplast thylakoid membrane. The catalysed reaction is a plastoquinone + NADH + (n+1) H(+)(in) = a plastoquinol + NAD(+) + n H(+)(out). The enzyme catalyses a plastoquinone + NADPH + (n+1) H(+)(in) = a plastoquinol + NADP(+) + n H(+)(out). NDH shuttles electrons from NAD(P)H:plastoquinone, via FMN and iron-sulfur (Fe-S) centers, to quinones in the photosynthetic chain and possibly in a chloroplast respiratory chain. The immediate electron acceptor for the enzyme in this species is believed to be plastoquinone. Couples the redox reaction to proton translocation, and thus conserves the redox energy in a proton gradient. This Ceratophyllum demersum (Rigid hornwort) protein is NAD(P)H-quinone oxidoreductase subunit 2 B, chloroplastic.